Consider the following 172-residue polypeptide: Adenine phosphoribosyltransferase (172 aa).

It belongs to the purine/pyrimidine phosphoribosyltransferase family. As to quaternary structure, homodimer.

It is found in the cytoplasm. The enzyme catalyses AMP + diphosphate = 5-phospho-alpha-D-ribose 1-diphosphate + adenine. Its pathway is purine metabolism; AMP biosynthesis via salvage pathway; AMP from adenine: step 1/1. In terms of biological role, catalyzes a salvage reaction resulting in the formation of AMP, that is energically less costly than de novo synthesis. This Clostridium acetobutylicum (strain ATCC 824 / DSM 792 / JCM 1419 / IAM 19013 / LMG 5710 / NBRC 13948 / NRRL B-527 / VKM B-1787 / 2291 / W) protein is Adenine phosphoribosyltransferase.